The chain runs to 734 residues: Photosystem I P700 chlorophyll a apoprotein A2 (734 aa).

8 helical membrane passes run 46–69 (IFAS…FHVA), 135–158 (LYTG…LHLQ), 175–199 (LNHH…HVAI), 273–291 (IAHH…GHMY), 330–353 (LHFQ…QHMY), 369–395 (AALY…IFFI), 417–439 (AIIS…LYVH), and 517–535 (FLVH…LILV). [4Fe-4S] cluster is bound by residues Cys559 and Cys568. Helical transmembrane passes span 575–596 (AFYL…YWHW) and 643–665 (LSVW…MFLI). Positions 654, 662, and 670 each coordinate chlorophyll a. Trp671 serves as a coordination point for phylloquinone. A helical transmembrane segment spans residues 707-727 (LVGLVHFSVGYIFTYAAFLIA).

This sequence belongs to the PsaA/PsaB family. In terms of assembly, the PsaA/B heterodimer binds the P700 chlorophyll special pair and subsequent electron acceptors. PSI consists of a core antenna complex that captures photons, and an electron transfer chain that converts photonic excitation into a charge separation. The eukaryotic PSI reaction center is composed of at least 11 subunits. The cofactor is P700 is a chlorophyll a/chlorophyll a' dimer, A0 is one or more chlorophyll a, A1 is one or both phylloquinones and FX is a shared 4Fe-4S iron-sulfur center..

It is found in the plastid. The protein localises to the chloroplast thylakoid membrane. The enzyme catalyses reduced [plastocyanin] + hnu + oxidized [2Fe-2S]-[ferredoxin] = oxidized [plastocyanin] + reduced [2Fe-2S]-[ferredoxin]. Functionally, psaA and PsaB bind P700, the primary electron donor of photosystem I (PSI), as well as the electron acceptors A0, A1 and FX. PSI is a plastocyanin-ferredoxin oxidoreductase, converting photonic excitation into a charge separation, which transfers an electron from the donor P700 chlorophyll pair to the spectroscopically characterized acceptors A0, A1, FX, FA and FB in turn. Oxidized P700 is reduced on the lumenal side of the thylakoid membrane by plastocyanin. The sequence is that of Photosystem I P700 chlorophyll a apoprotein A2 from Nicotiana tomentosiformis (Tobacco).